The primary structure comprises 179 residues: ATP synthase subunit delta (179 aa).

Belongs to the ATPase delta chain family. As to quaternary structure, F-type ATPases have 2 components, F(1) - the catalytic core - and F(0) - the membrane proton channel. F(1) has five subunits: alpha(3), beta(3), gamma(1), delta(1), epsilon(1). F(0) has three main subunits: a(1), b(2) and c(10-14). The alpha and beta chains form an alternating ring which encloses part of the gamma chain. F(1) is attached to F(0) by a central stalk formed by the gamma and epsilon chains, while a peripheral stalk is formed by the delta and b chains.

The protein localises to the cell inner membrane. In terms of biological role, f(1)F(0) ATP synthase produces ATP from ADP in the presence of a proton or sodium gradient. F-type ATPases consist of two structural domains, F(1) containing the extramembraneous catalytic core and F(0) containing the membrane proton channel, linked together by a central stalk and a peripheral stalk. During catalysis, ATP synthesis in the catalytic domain of F(1) is coupled via a rotary mechanism of the central stalk subunits to proton translocation. Its function is as follows. This protein is part of the stalk that links CF(0) to CF(1). It either transmits conformational changes from CF(0) to CF(1) or is implicated in proton conduction. The polypeptide is ATP synthase subunit delta (Anaeromyxobacter dehalogenans (strain 2CP-C)).